A 1976-amino-acid polypeptide reads, in one-letter code: Putative callose synthase 8 (1976 aa).

Residues 1–530 are Cytoplasmic-facing; sequence MSHEIVPVDP…FWQIFRSFDR (530 aa). A helical transmembrane segment spans residues 531 to 551; it reads MWSFFVLSLQALIIMACHDVG. The Extracellular portion of the chain corresponds to 552-565; sequence SPLQVFNANIFEDV. The chain crosses the membrane as a helical span at residues 566–586; sequence MSIFITSAILKLIKGILDIIF. At 587 to 602 the chain is on the cytoplasmic side; the sequence is KWKARNTMPINEKKKR. Residues 603-623 traverse the membrane as a helical segment; the sequence is LVKLGFAAMWTIILPVLYSHS. At 624–648 the chain is on the extracellular side; it reads RRKYICYFTNYKTWLGEWCFSPYMV. A helical membrane pass occupies residues 649–669; that stretch reads AVTIYLTGSAIELVLFFVPAI. The Cytoplasmic segment spans residues 670–707; that stretch reads SKYIETSNHGIFKTLSWWGQPRLYVGRGMQETQVSQFK. Residues 708–728 traverse the membrane as a helical segment; it reads YTFFWILVLLTKFAFSYAFEI. Topologically, residues 729-759 are extracellular; sequence KPLIEPTRLIMKVGVRNYEWHEIFPEVKSNA. The chain crosses the membrane as a helical span at residues 760 to 780; sequence AAIVAVWAPIMVVYFMDTQIW. Residues 781–1544 lie on the Cytoplasmic side of the membrane; that stretch reads YSVYCTIFGG…FDFFRMLSCY (764 aa). A helical transmembrane segment spans residues 1545–1565; it reads FTTIGFYFSSLISVIGIYIYL. Over 1566-1595 the chain is Extracellular; the sequence is YGQLYLVLSGLQKTLILEAKVKNIKSLETA. A helical transmembrane segment spans residues 1596–1616; it reads LASQSFIQLGLLTGLPMVMEI. The Cytoplasmic portion of the chain corresponds to 1617–1620; it reads GLEK. Residues 1621-1641 traverse the membrane as a helical segment; that stretch reads GFLIAFQDFILMQLQLAAFFF. Residues 1642–1688 lie on the Extracellular side of the membrane; sequence TFSLGTKTHYFGRTILHGGAKYRPTGRKVVVFHANFSENYRLYSRSH. N-linked (GlcNAc...) asparagine glycosylation occurs at Asn-1676. The helical transmembrane segment at 1689 to 1709 threads the bilayer; it reads FIKGFELMILLVVYELFKHTS. Residues 1710 to 1715 are Cytoplasmic-facing; sequence QSNMAY. A helical membrane pass occupies residues 1716–1736; the sequence is SFITFSVWFMSFTWLCAPFLF. The Extracellular segment spans residues 1737 to 1790; that stretch reads NPSGFTWEIIVGDWRDWNRWIKEQGGIGIQQDKSWQSWWNDEQAHLRGSGVGAR. Residues 1791-1811 form a helical membrane-spanning segment; that stretch reads CLEIILSLRFFVYQYGLVYHL. The Cytoplasmic segment spans residues 1812–1819; sequence DITQSNTN. Residues 1820-1840 traverse the membrane as a helical segment; that stretch reads IIVYALSWVVILATFFTVKAV. Over 1841–1856 the chain is Extracellular; the sequence is DLGRQLFSTRKHLVFR. The chain crosses the membrane as a helical span at residues 1857-1877; that stretch reads FFKVFVFVSILTIIITLANIC. Residues 1878 to 1884 are Cytoplasmic-facing; it reads HLSVKDL. The helical transmembrane segment at 1885 to 1905 threads the bilayer; it reads LVSCLAFLPTGWGLILIAQAV. At 1906–1928 the chain is on the extracellular side; sequence RPKIEGTSLWEFTQVLARAYDYG. A helical membrane pass occupies residues 1929–1949; it reads MGVVLFAPMAILAWLPIISAF. Residues 1950 to 1976 lie on the Cytoplasmic side of the membrane; sequence QTRFLFNEAFNRRLQIQPILAGKKKNR.

This sequence belongs to the glycosyltransferase 48 family.

The protein resides in the cell membrane. The enzyme catalyses [(1-&gt;3)-beta-D-glucosyl](n) + UDP-alpha-D-glucose = [(1-&gt;3)-beta-D-glucosyl](n+1) + UDP + H(+). Involved in callose synthesis at the forming cell plate during cytokinesis. During plant growth and development, callose is found as a transitory component of the cell plate in dividing cells, is a major component of pollen mother cell walls and pollen tubes, and is found as a structural component of plasmodesmatal canals. The protein is Putative callose synthase 8 (CALS8) of Arabidopsis thaliana (Mouse-ear cress).